The sequence spans 231 residues: Ribonuclease 3 (231 aa).

The RNase III domain maps to 12 to 139; it reads LKAFLQKNNI…LIAAIYLDQG (128 aa). Glu52 contacts Mg(2+). Residue Asp56 is part of the active site. Residues Asp125 and Glu128 each contribute to the Mg(2+) site. The active site involves Glu128. The region spanning 165 to 231 is the DRBM domain; it reads DPKSELQEYF…AANALSKLKT (67 aa).

It belongs to the ribonuclease III family. In terms of assembly, homodimer. It depends on Mg(2+) as a cofactor.

It localises to the cytoplasm. It catalyses the reaction Endonucleolytic cleavage to 5'-phosphomonoester.. Functionally, digests double-stranded RNA. Involved in the processing of primary rRNA transcript to yield the immediate precursors to the large and small rRNAs (23S and 16S). Processes some mRNAs, and tRNAs when they are encoded in the rRNA operon. Processes pre-crRNA and tracrRNA of type II CRISPR loci if present in the organism. This is Ribonuclease 3 from Mycoplasmopsis synoviae (strain 53) (Mycoplasma synoviae).